The following is a 209-amino-acid chain: Kynurenine formamidase (209 aa).

Phenylalanine 18 contacts substrate. Zn(2+) is bound by residues histidine 48, histidine 52, and aspartate 54. Histidine 58 acts as the Proton donor/acceptor in catalysis. Positions 160 and 172 each coordinate Zn(2+).

The protein belongs to the Cyclase 1 superfamily. KynB family. Homodimer. It depends on Zn(2+) as a cofactor.

It catalyses the reaction N-formyl-L-kynurenine + H2O = L-kynurenine + formate + H(+). It functions in the pathway amino-acid degradation; L-tryptophan degradation via kynurenine pathway; L-kynurenine from L-tryptophan: step 2/2. Catalyzes the hydrolysis of N-formyl-L-kynurenine to L-kynurenine, the second step in the kynurenine pathway of tryptophan degradation. The chain is Kynurenine formamidase from Bordetella petrii (strain ATCC BAA-461 / DSM 12804 / CCUG 43448).